The chain runs to 398 residues: LIM domain-binding protein 2 (398 aa).

Disordered regions lie at residues 245–280 and 354–398; these read PPAE…TSAY and DAAN…QASQ. Over residues 263 to 279 the composition is skewed to low complexity; that stretch reads STNNASNSNAGNNATSA. The LIM interaction domain (LID) domain occupies 323 to 362; that stretch reads DVMVVGEPTLMGGEFGDEDERLITRLENTQYDAANGMDDE.

This sequence belongs to the LDB family. As to expression, expressed in adult brain, lung, spleen and kidney. Isoform b is generally expressed at a higher level than isoform a.

It localises to the nucleus. Its function is as follows. Binds to the LIM domain of a wide variety of LIM domain-containing transcription factors. The protein is LIM domain-binding protein 2 of Xenopus laevis (African clawed frog).